Here is a 122-residue protein sequence, read N- to C-terminus: Ribosome-binding factor A (122 aa).

Belongs to the RbfA family. In terms of assembly, monomer. Binds 30S ribosomal subunits, but not 50S ribosomal subunits or 70S ribosomes.

The protein resides in the cytoplasm. Its function is as follows. One of several proteins that assist in the late maturation steps of the functional core of the 30S ribosomal subunit. Associates with free 30S ribosomal subunits (but not with 30S subunits that are part of 70S ribosomes or polysomes). Required for efficient processing of 16S rRNA. May interact with the 5'-terminal helix region of 16S rRNA. This is Ribosome-binding factor A from Moorella thermoacetica (strain ATCC 39073 / JCM 9320).